Consider the following 260-residue polypeptide: Alpha- and beta-fibrinogenase OhS1 (260 aa).

The signal sequence occupies residues 1-18; sequence MALIRVLASLLILQLSYA. The propeptide occupies 19 to 24; the sequence is VTPFDR. The Peptidase S1 domain occupies 25-248; the sequence is IIGGFECNEY…YIDWIEGIIA (224 aa). 6 disulfide bridges follow: cysteine 31–cysteine 163, cysteine 50–cysteine 66, cysteine 98–cysteine 255, cysteine 142–cysteine 209, cysteine 174–cysteine 188, and cysteine 199–cysteine 224. N-linked (GlcNAc...) asparagine glycosylation is present at asparagine 44. Histidine 65 acts as the Charge relay system in catalysis. An N-linked (GlcNAc...) asparagine glycan is attached at asparagine 79. The active-site Charge relay system is aspartate 110. N-linked (GlcNAc...) asparagine glycosylation is found at asparagine 117 and asparagine 121. Residue serine 203 is the Charge relay system of the active site. A glycan (N-linked (GlcNAc...) asparagine) is linked at asparagine 250.

The protein belongs to the peptidase S1 family. Snake venom subfamily. Monomer. Expressed by the venom gland.

Its subcellular location is the secreted. With respect to regulation, completely inhibited by NPGB, PMSF, diisopropylfluorophosphate (DFP), benzamidine and soybean trypsin inhibitor. Not inhibited by EDTA. Functionally, snake venom serine protease that possesses potent fibrinogenolytic (on both alpha- (FGA) and beta-chains (FGB)) and amidolytic activities. Selectively cleaves Arg-|-Xaa or Lys-|-Xaa bonds. This Ophiophagus hannah (King cobra) protein is Alpha- and beta-fibrinogenase OhS1.